Reading from the N-terminus, the 138-residue chain is Large ribosomal subunit protein uL16 (138 aa).

The span at 1-15 (MLSPKKVKYRKKQRG) shows a compositional bias: basic residues. The tract at residues 1-21 (MLSPKKVKYRKKQRGRLSGEA) is disordered.

The protein belongs to the universal ribosomal protein uL16 family. Part of the 50S ribosomal subunit.

Its function is as follows. Binds 23S rRNA and is also seen to make contacts with the A and possibly P site tRNAs. The chain is Large ribosomal subunit protein uL16 from Borreliella afzelii (strain PKo) (Borrelia afzelii).